A 200-amino-acid polypeptide reads, in one-letter code: Small ribosomal subunit protein uS5 (200 aa).

The segment covering 1–22 (MAEERGEKRGRRRDRENPRDRD) has biased composition (basic and acidic residues). Residues 1 to 26 (MAEERGEKRGRRRDRENPRDRDDESS) are disordered. The S5 DRBM domain occupies 28 to 91 (LVDKLVGINR…EEAKRNLVRI (64 aa)).

Belongs to the universal ribosomal protein uS5 family. As to quaternary structure, part of the 30S ribosomal subunit. Contacts proteins S4 and S8.

With S4 and S12 plays an important role in translational accuracy. Functionally, located at the back of the 30S subunit body where it stabilizes the conformation of the head with respect to the body. The sequence is that of Small ribosomal subunit protein uS5 from Hyphomonas neptunium (strain ATCC 15444).